A 79-amino-acid chain; its full sequence is Serine protease inhibitor Kazal-type 1 (79 aa).

The N-terminal stretch at 1–18 is a signal peptide; the sequence is MKVAIIFLLSALALLSLA. One can recognise a Kazal-like domain in the interval 26–79; sequence NGKTPNCPKQIMGCPRIYDPVCGTNGITYPSECSLCFENRKFGTSIHIQRRGTC. 3 disulfides stabilise this stretch: cysteine 32–cysteine 61, cysteine 39–cysteine 58, and cysteine 47–cysteine 79.

Its subcellular location is the secreted. Functionally, serine protease inhibitor which exhibits anti-trypsin activity. In the pancreas, protects against trypsin-catalyzed premature activation of zymogens. In terms of biological role, in the male reproductive tract, binds to sperm heads where it modulates sperm capacitance by inhibiting calcium uptake and nitrogen oxide (NO) production. The polypeptide is Serine protease inhibitor Kazal-type 1 (Rattus norvegicus (Rat)).